The sequence spans 50 residues: Basic phospholipase A2 Bmaj-9 (50 aa).

The Ca(2+) site is built by tyrosine 27, glycine 29, and glycine 31. A disulfide bridge links cysteine 28 with cysteine 45. Histidine 48 is an active-site residue. Residue aspartate 49 coordinates Ca(2+).

This sequence belongs to the phospholipase A2 family. Group II subfamily. D49 sub-subfamily. Ca(2+) is required as a cofactor. In terms of tissue distribution, expressed by the venom gland.

Its subcellular location is the secreted. The catalysed reaction is a 1,2-diacyl-sn-glycero-3-phosphocholine + H2O = a 1-acyl-sn-glycero-3-phosphocholine + a fatty acid + H(+). Functionally, snake venom phospholipase A2 (PLA2) that causes irreversible neuromuscular blockade in chick biventer cervicis muscle preparations. The neuromuscular blockade is mediated by inhibitory action at the presynaptic motor nerve endings. PLA2 catalyzes the calcium-dependent hydrolysis of the 2-acyl groups in 3-sn-phosphoglycerides. The polypeptide is Basic phospholipase A2 Bmaj-9 (Bothrops marajoensis (Marajo lancehead)).